Reading from the N-terminus, the 67-residue chain is MGEISITKLLVVAALVVLLFGTKKLRTLGGDLGTAIKGFKKAMNDEDAGVKKDVDGSVQAEKLSHKE.

Residues Ile-4–Gly-21 form a helical membrane-spanning segment.

Belongs to the TatA/E family. TatE subfamily.

The protein localises to the cell inner membrane. Functionally, part of the twin-arginine translocation (Tat) system that transports large folded proteins containing a characteristic twin-arginine motif in their signal peptide across membranes. TatE shares overlapping functions with TatA. This Salmonella dublin (strain CT_02021853) protein is Probable Sec-independent protein translocase protein TatE.